Here is an 85-residue protein sequence, read N- to C-terminus: Large ribosomal subunit protein bL27 (85 aa).

The segment at 1–22 is disordered; that stretch reads MAHKKAGGSTRNGRDSESKRLG.

It belongs to the bacterial ribosomal protein bL27 family.

This chain is Large ribosomal subunit protein bL27, found in Marinomonas sp. (strain MWYL1).